A 542-amino-acid chain; its full sequence is Chitinase 1 (542 aa).

The GH18 domain maps to phenylalanine 68 to arginine 506. Chitin-binding positions include glutamine 186–glutamate 187 and glycine 213–serine 216. The active-site Proton donor is the glutamate 256. Residues tyrosine 257, methionine 323–aspartate 326, and tryptophan 486 contribute to the chitin site.

The protein belongs to the glycosyl hydrolase 18 family. In terms of assembly, semipurified toxin complex consists of at least YenA1-YenA2-YenB-YenC1-YenC2-Chi1-Chi2. The Yen-TC:K9 subcomplex is about 26 nm tall and 22 nm in diameter with 5-fold symmetry and 5 copies of YenA1, YenA2, Chi1 and Chi2; the chitinase subunits may be solvent accessible on the exterior the complex. The Yen-TC:K9 subcomplex has no insecticidal activity. The native complex with additional YenB, YenC1 and YenC2 subunits is 16 nm taller and is insecticidal; the toxicity-conferring subunits are present at about 1 copy each.

The protein localises to the secreted. The enzyme catalyses Random endo-hydrolysis of N-acetyl-beta-D-glucosaminide (1-&gt;4)-beta-linkages in chitin and chitodextrins.. Toxin complex is secreted when grown at 25 degrees Celsius or less; at higher temperatures the proteins are present intracellularly but not secreted. Part of an orally active toxin complex (TC) with strong insecticidal effects on larvae of the Coleoptera Costelytra zealandica, Acrossidius tasmania and Adoryphorus couloni and some Lepidoptera larvae. The TC has an endochitinase activity. This subunit might aid infection by degradation of the larval peritrophic membrane. The sequence is that of Chitinase 1 from Yersinia entomophaga.